A 103-amino-acid polypeptide reads, in one-letter code: MSGRGKGGKGLGKGGAKRHRKILRDNIQGITKPAIRRLARRGGVKRISGLIYDETRGVLKLFLESVIRDSVTYTEHAKRKTVTSLDVVYALKRQGRTLYGFGA.

The span at 1–14 (MSGRGKGGKGLGKG) shows a compositional bias: gly residues. Residues 1 to 20 (MSGRGKGGKGLGKGGAKRHR) form a disordered region. The residue at position 6 (K6) is an N6-acetyl-N6-methyllysine; alternate. An N6-methyllysine; alternate mark is found at K6, K9, and K13. At K13 the chain carries N6-acetyl-N6-methyllysine; alternate. The DNA-binding element occupies 17-21 (KRHRK). Position 92 is an N6-glutaryllysine (K92).

The protein belongs to the histone H4 family. As to quaternary structure, the nucleosome is a histone octamer containing two molecules each of H2A, H2B, H3 and H4 assembled in one H3-H4 heterotetramer and two H2A-H2B heterodimers. The octamer wraps approximately 147 bp of DNA. Post-translationally, glutarylation at Lys-92 (H4K91glu) destabilizes nucleosomes by promoting dissociation of the H2A-H2B dimers from nucleosomes.

The protein resides in the nucleus. The protein localises to the chromosome. Its function is as follows. Core component of nucleosome. Nucleosomes wrap and compact DNA into chromatin, limiting DNA accessibility to the cellular machineries which require DNA as a template. Histones thereby play a central role in transcription regulation, DNA repair, DNA replication and chromosomal stability. DNA accessibility is regulated via a complex set of post-translational modifications of histones, also called histone code, and nucleosome remodeling. In Mycosarcoma maydis (Corn smut fungus), this protein is Histone H4 (HHF1).